We begin with the raw amino-acid sequence, 1859 residues long: MEIENEQICTCIAQILHLLNSLIITFLDDDKTETGQSFVYIDGFLVKKHNNQHTIVNFETYKNKMKVSDRRKFEKANFDEFESALNNKNDLVHCPSITLFESIPTEVRSFYEDEKSGLIKVVKFRTGAMDRKRSFEKIVVSVMVGKNVQKFLTFVEDEPDFQGGPIPSKYLIPKKINLMVYTLFQVHTLKFNRKDYDTLSLFYLNRGYYNELSFRVLERCYEIASARPNDSSTMRTFTDFVSGTPIVRGLQKSTIRKYGYNLAPYMFLLLHVDELSIFSAYQASLPGEKKVDTERLKRDLCPRKPTEIKYFSQICNDMMNKKDRLGDILHIILRACALNFGAGPRGGAGDEEDRSITNEEPIIPSVDEHGLKVCKLRSPNTPRRLRKTLDAVKALLVSSCACTARDLDIFDDNNGVAMWKWIKILYHEVAQETALKDSYRITLVPSSDGVSVCGKLFNREYVRGFYFACKAQFDNLWEELNDCFYMPTVVDIASLILRNREVLFREPKRGIDEYLENDSFLQMIPVKYREIVLPKLRRDTNKMTAALKNKVTVAIDELTVPLMWMIHFAVGYPYRYPELQLLAFAGPQRNVYVDDTTRRIQLYTDYNKNGSSEPRLKTLDGLTSDYVFYFVTVLRQMQICALGNSYDAFNHDPWMDVVGFEDPDQVTNRDISRIVLYSYMFLNTAKGCLVEYATFRQYMRELPKNAPQKLNFREMRQGLIALGRHCVGSRFETDLYESATSELMANHSVQTGRNIYGVDSFSLTSVSGTTATLLQERASERWIQWLGLESDYHCSFSSTRNAEDVVAGEAASSDHHQKISRVTRKRPREPKSTNDILVAGQKLFGSSFEFRDLHQLRLCHEIYMADTPSVAVQAPPGYGKTELFHLPLIALASKGDVKYVSFLFVPYTVLLANCMIRLSRCGCLNVAPVRNFIEEGCDGVTDLYVGIYDDLASTNFTDRIAAWENIVECTFRTNNVKLGYLIVDEFHNFETEVYRQSQFGGITNLDFDAFEKAIFLSGTAPEAVADAALQRIGLTGLAKKSMDINELKRSEDLSRGLSSYPTRMFNLIKEKSEVPLGHVHKIWKKVESQPEEALKLLLALFEIEPESKAIVVASTTNEVEELACSWRKYFRVVWIHGKLGAAEKVSRTKEFVTDGSMRVLIGTKLVTEGIDIKQLMMVIMLDNRLNIIELIQGVGRLRDGGLCYLLSRKNSWAARNRKGELPPIKEGCITEQVREFYGLESKKGKKGQHVGCCGSRTDLSADTVELIERMDRLAEKQATASMSIVALPSSFQESNSSDRCRKYCSSDEDSDTCIHGSANASTNATTNSSTNATTTASTNVRTSATTTASINVRTSATTTESTNSSTNATTTASTNVRTSATTTASINVRTSATTTESTNSNTSATTTESTDSNTSATTTESTDSNTSATTTASTNSSTNATTTASTNSSTNATTTESTNASAKEDANKDGNAEDNRFHPVTDINKESYKRKGSQMVLLERKKLKAQFPNTSENMNVLQFLGFRSDEIKHLFLYGIDVYFCPEGVFTQYGLCKGCQKMFELCVCWAGQKVSYRRMAWEALAVERMLRNDEEYKEYLEDIEPYHGDPVGYLKFFSVKRGEIYSQIQRNYAWYLAITRRRETISVLDSTRGKQGSQVFRMSGRQIKELYYKVWSNLRESKTEVLQYFLNWDEKKCREEWEAKDDTVFVEALEKVGVFQRLRSMTSAGLQGPQYVKLQFSRHHRQLRSRYELSLGMHLRDQLALGVTPSKVPHWTAFLSMLIGLFCNKTFRQKLEYLLEQISEVWLLPHWLDLANVEVLAADNTRVPLYMLMVAVHKELDSDDVPDGRFDILLCRDSSREVGE.

In terms of domain architecture, Helicase ATP-binding spans 861–1038; sequence EIYMADTPSV…LQRIGLTGLA (178 aa). 874–881 contacts ATP; sequence APPGYGKT. Residues 1095–1244 form the Helicase C-terminal domain; that stretch reads KLLLALFEIE…EFYGLESKKG (150 aa). The segment covering 1318-1461 has biased composition (low complexity); the sequence is ANASTNATTN…ATTTESTNAS (144 aa). The interval 1318–1485 is disordered; the sequence is ANASTNATTN…RFHPVTDINK (168 aa). The segment covering 1462–1485 has biased composition (basic and acidic residues); that stretch reads AKEDANKDGNAEDNRFHPVTDINK.

Belongs to the helicase family. Yeast subtelomeric Y' repeat subfamily.

Catalyzes DNA unwinding and is involved in telomerase-independent telomere maintenance. The chain is Y' element ATP-dependent helicase protein 1 copy 6 (YRF1-6) from Saccharomyces cerevisiae (strain ATCC 204508 / S288c) (Baker's yeast).